A 198-amino-acid polypeptide reads, in one-letter code: Superoxide dismutase [Mn], mitochondrial (198 aa).

H26 provides a ligand contact to Mn(2+). Y34 is subject to 3'-nitrotyrosine. N6-acetyllysine; alternate occurs at positions 44 and 51. N6-succinyllysine; alternate occurs at positions 44 and 51. H74 contributes to the Mn(2+) binding site. Position 90 is an N6-acetyllysine (K90). An N6-acetyllysine; alternate mark is found at K98 and K106. 2 positions are modified to N6-succinyllysine; alternate: K98 and K106. Mn(2+) is bound by residues D159 and H163. N6-acetyllysine is present on K178.

This sequence belongs to the iron/manganese superoxide dismutase family. In terms of assembly, homotetramer. It depends on Mn(2+) as a cofactor. Post-translationally, nitrated under oxidative stress. Nitration coupled with oxidation inhibits the catalytic activity. Acetylation at Lys-98 decreases enzymatic activity. Deacetylated by SIRT3 upon exposure to ionizing radiations or after long fasting. In terms of processing, polyubiquitinated; leading to proteasomal degradation. Deubiquitinated by USP36 which increases protein stability.

It localises to the mitochondrion matrix. It catalyses the reaction 2 superoxide + 2 H(+) = H2O2 + O2. Its function is as follows. Destroys superoxide anion radicals which are normally produced within the cells and which are toxic to biological systems. The chain is Superoxide dismutase [Mn], mitochondrial (SOD2) from Pan troglodytes (Chimpanzee).